The primary structure comprises 64 residues: Ferredoxin-like protein in nif region (64 aa).

The 4Fe-4S ferredoxin-type domain occupies 2–30 (AFKIIASQCTQCGACEFECPSNAIELKGE). Residues Cys-10, Cys-13, Cys-16, Cys-20, Cys-39, Cys-42, Cys-51, and Cys-55 each contribute to the [4Fe-4S] cluster site.

[4Fe-4S] cluster is required as a cofactor.

This Sinorhizobium fredii (strain NBRC 101917 / NGR234) protein is Ferredoxin-like protein in nif region (fdxN).